Reading from the N-terminus, the 315-residue chain is Homoserine kinase (315 aa).

96–106 (PHSRGLGSSAA) contacts ATP.

Belongs to the GHMP kinase family. Homoserine kinase subfamily.

The protein localises to the cytoplasm. It carries out the reaction L-homoserine + ATP = O-phospho-L-homoserine + ADP + H(+). It participates in amino-acid biosynthesis; L-threonine biosynthesis; L-threonine from L-aspartate: step 4/5. Catalyzes the ATP-dependent phosphorylation of L-homoserine to L-homoserine phosphate. This is Homoserine kinase from Mycobacterium leprae (strain Br4923).